A 159-amino-acid polypeptide reads, in one-letter code: Ribosomal RNA large subunit methyltransferase H (159 aa).

Residues leucine 76, glycine 108, and 127–132 (FSKMTF) contribute to the S-adenosyl-L-methionine site.

This sequence belongs to the RNA methyltransferase RlmH family. In terms of assembly, homodimer.

The protein resides in the cytoplasm. The enzyme catalyses pseudouridine(1915) in 23S rRNA + S-adenosyl-L-methionine = N(3)-methylpseudouridine(1915) in 23S rRNA + S-adenosyl-L-homocysteine + H(+). Specifically methylates the pseudouridine at position 1915 (m3Psi1915) in 23S rRNA. This chain is Ribosomal RNA large subunit methyltransferase H, found in Bacillus subtilis (strain 168).